Reading from the N-terminus, the 2378-residue chain is Dimodular nonribosomal peptide synthase (2378 aa).

Carrier domains are found at residues 961–1036 (APRT…DLAQ) and 2036–2111 (GPRT…EMGS). An O-(pantetheine 4'-phosphoryl)serine mark is found at Ser996 and Ser2071.

It belongs to the ATP-dependent AMP-binding enzyme family. Requires pantetheine 4'-phosphate as cofactor.

It catalyses the reaction holo-[peptidyl-carrier protein] + L-threonine + ATP = L-threonyl-[peptidyl-carrier protein] + AMP + diphosphate. The catalysed reaction is holo-[peptidyl-carrier protein] + glycine + ATP = glycyl-[peptidyl-carrier protein] + AMP + diphosphate. It functions in the pathway siderophore biosynthesis; bacillibactin biosynthesis. In terms of biological role, specifically adenylates L-threonine and, to a lesser extent, glycine and covalently loads both amino acids onto their corresponding peptidyl carrier domains. This is Dimodular nonribosomal peptide synthase (dhbF) from Bacillus subtilis (strain 168).